The following is a 175-amino-acid chain: ADP-ribose 1''-phosphate phosphatase (175 aa).

The region spanning 1–175 (MSKLNYIKGD…HQVLINVYVI (175 aa)) is the Macro domain. Substrate is bound by residues 9–11 (GDL), 25–27 (ACN), 32–37 (WGAGVA), and 147–153 (INAGLFN).

This sequence belongs to the POA1 family.

It catalyses the reaction ADP-alpha-D-ribose 1''-phosphate + H2O = ADP-D-ribose + phosphate. Its function is as follows. Highly specific phosphatase involved in the metabolism of ADP-ribose 1''-phosphate (Appr1p) which is produced as a consequence of tRNA splicing. The protein is ADP-ribose 1''-phosphate phosphatase (POA1) of Meyerozyma guilliermondii (strain ATCC 6260 / CBS 566 / DSM 6381 / JCM 1539 / NBRC 10279 / NRRL Y-324) (Yeast).